The sequence spans 279 residues: Large ribosomal subunit protein uL2 (279 aa).

A disordered region spans residues 223–279 (VVMNPVDHPHGGGEGRTSGGRHPVSPWGQPTKGYKTRRSARPSDKFIVQKRKRNRNR). The segment covering 270-279 (VQKRKRNRNR) has biased composition (basic residues).

Belongs to the universal ribosomal protein uL2 family. In terms of assembly, part of the 50S ribosomal subunit. Forms a bridge to the 30S subunit in the 70S ribosome.

In terms of biological role, one of the primary rRNA binding proteins. Required for association of the 30S and 50S subunits to form the 70S ribosome, for tRNA binding and peptide bond formation. It has been suggested to have peptidyltransferase activity; this is somewhat controversial. Makes several contacts with the 16S rRNA in the 70S ribosome. This chain is Large ribosomal subunit protein uL2, found in Leptospira borgpetersenii serovar Hardjo-bovis (strain JB197).